Here is a 298-residue protein sequence, read N- to C-terminus: HTH-type transcriptional regulator ArgP (298 aa).

Residues 4 to 60 (LDYRWIEALDSVVSKGSFERAAEQLFISQSAVSQRIKQLEKYLAQPVLIREQPPRPT) enclose the HTH lysR-type domain. The segment at residues 21 to 40 (FERAAEQLFISQSAVSQRIK) is a DNA-binding region (H-T-H motif).

It belongs to the LysR transcriptional regulatory family. Homodimer.

In terms of biological role, controls the transcription of genes involved in arginine and lysine metabolism. The polypeptide is HTH-type transcriptional regulator ArgP (Vibrio cholerae serotype O1 (strain ATCC 39541 / Classical Ogawa 395 / O395)).